We begin with the raw amino-acid sequence, 124 residues long: Large ribosomal subunit protein uL18 (124 aa).

This sequence belongs to the universal ribosomal protein uL18 family. In terms of assembly, part of the 50S ribosomal subunit; part of the 5S rRNA/L5/L18/L25 subcomplex. Contacts the 5S and 23S rRNAs.

This is one of the proteins that bind and probably mediate the attachment of the 5S RNA into the large ribosomal subunit, where it forms part of the central protuberance. The chain is Large ribosomal subunit protein uL18 from Caldicellulosiruptor saccharolyticus (strain ATCC 43494 / DSM 8903 / Tp8T 6331).